Here is a 442-residue protein sequence, read N- to C-terminus: tRNA modification GTPase MnmE (442 aa).

(6S)-5-formyl-5,6,7,8-tetrahydrofolate contacts are provided by Arg27, Glu84, and Lys124. The TrmE-type G domain occupies 221–366 (GLHVVIVGAP…LLDALQAFAE (146 aa)). Residues 231 to 236 (NAGKSS), 250 to 256 (SEEAGTT), and 275 to 278 (DTAG) contribute to the GTP site. Ser235 and Thr256 together coordinate Mg(2+). Lys442 serves as a coordination point for (6S)-5-formyl-5,6,7,8-tetrahydrofolate.

It belongs to the TRAFAC class TrmE-Era-EngA-EngB-Septin-like GTPase superfamily. TrmE GTPase family. Homodimer. Heterotetramer of two MnmE and two MnmG subunits. Requires K(+) as cofactor.

It is found in the cytoplasm. Exhibits a very high intrinsic GTPase hydrolysis rate. Involved in the addition of a carboxymethylaminomethyl (cmnm) group at the wobble position (U34) of certain tRNAs, forming tRNA-cmnm(5)s(2)U34. This chain is tRNA modification GTPase MnmE, found in Brucella ovis (strain ATCC 25840 / 63/290 / NCTC 10512).